Here is a 341-residue protein sequence, read N- to C-terminus: Phenylalanine--tRNA ligase alpha subunit (341 aa).

Glu-254 contributes to the Mg(2+) binding site.

This sequence belongs to the class-II aminoacyl-tRNA synthetase family. Phe-tRNA synthetase alpha subunit type 1 subfamily. In terms of assembly, tetramer of two alpha and two beta subunits. Mg(2+) is required as a cofactor.

Its subcellular location is the cytoplasm. The catalysed reaction is tRNA(Phe) + L-phenylalanine + ATP = L-phenylalanyl-tRNA(Phe) + AMP + diphosphate + H(+). The polypeptide is Phenylalanine--tRNA ligase alpha subunit (Chlorobium phaeovibrioides (strain DSM 265 / 1930) (Prosthecochloris vibrioformis (strain DSM 265))).